Consider the following 375-residue polypeptide: Chanoclavine-I aldehyde reductase ifgG (375 aa).

FMN-binding positions include 31-33 (PTT), Ala-66, Gln-108, and His-176. Positions 176 and 179 each coordinate substrate. Tyr-181 functions as the Proton donor in the catalytic mechanism. Residues Lys-228, Gly-300, 325–326 (GR), and Arg-326 contribute to the FMN site. Tyr-353 is a binding site for substrate.

It belongs to the NADH:flavin oxidoreductase/NADH oxidase family. The cofactor is FMN.

The enzyme catalyses dihydrochanoclavine-I aldehyde + NADP(+) = chanoclavine-I aldehyde + NADPH + H(+). It participates in alkaloid biosynthesis; ergot alkaloid biosynthesis. Chanoclavine-I aldehyde reductase; part of the gene cluster that mediates the biosynthesis of isofumigaclavines, fungal ergot alkaloids. The tryptophan dimethylallyltransferase ifgA catalyzes the first step of ergot alkaloid biosynthesis by condensing dimethylallyl diphosphate (DMAP) and tryptophan to form 4-dimethylallyl-L-tryptophan. The second step is catalyzed by the methyltransferase ifgB that methylates 4-dimethylallyl-L-tryptophan in the presence of S-adenosyl-L-methionine, resulting in the formation of N-methyl-dimethylallyl-L-tryptophan. The catalase ifgD and the FAD-dependent oxidoreductase ifgC then transform N-methyl-dimethylallyl-L-tryptophan to chanoclavine-I which is further oxidized by ifgE in the presence of NAD(+), resulting in the formation of chanoclavine-I aldehyde. The chanoclavine-I aldehyde reductases ifgG and/or fgaOx3 reduce chanoclavine-I aldehyde to dihydrochanoclavine-I aldehyde that spontaneously dehydrates to form 6,8-dimethyl-6,7-didehydroergoline. The festuclavine dehydrogenases ifgF1 and/or ifgF2 then catalyze the reduction of 6,8-dimethyl-6,7-didehydroergoline to form festuclavine. Hydrolysis of festuclavine by a yet undetermined cytochrome P450 monooxygenase (called ifgH) then leads to the formation of isofumigaclavine B which is in turn acetylated by ifgI to isofumigaclavine A. Penicillium roqueforti has interestingly at least two sets of genes for the consumption of chanoclavine-I aldehyde on three different loci, the OYEs ifgG/fgaOx3 and the festuclavine synthase homologs ifgF1/ifgF2. The reason for the duplication of these genes is unclear, probably to ensure the conversion of chanoclavine-I aldehyde by differential gene expression under various environmental conditions. This is Chanoclavine-I aldehyde reductase ifgG from Penicillium roqueforti (strain FM164).